The chain runs to 701 residues: MARKTPISLYRNIGISAHIDAGKTTTTERILFYTGLTHKLGEVHDGAATTDYMEQEQERGITITSAAVTSYWSGMAKQFPEHRFNIIDTPGHVDFTVEVERSMRVLDGAVMVYCAVGGVQPQSETVWRQANKYQVPRLAFVNKMDRQGANFFRVVEQMKTRLRANPVPIVIPVGAEDNFSGVVDLLKMKSIIWNEVDKGTTFTYGDIPAELVETAEEWRQNMIEAAAEASEELMDKYLGGDELTEEEIVGALRQRTLAGEIQPMLCGSAFKNKGVQRMLDAVVELLPAPTDIPPVQGVNPNTEEADSRQASDEEKFSALAFKMLNDKYVGQLTFIRVYSGVVKSGDTVLNSVKGTRERIGRLVQMTAADRTEIEEVRAGDIAAAIGLKDVTTGETLCAESAPIILERMEFPEPVIHIAVEPKTKADQEKMGIALNRLAKEDPSFRVRTDEESGQTIISGMGELHLEIIVDRMKREFGVEANIGAPQVAYRETIRKAVKAEYKHAKQSGGKGQYGHVVIEMEPMEPGGEGYEFIDEIKGGVIPREFIPSVDKGIRDTLPNGIVAGYPVVDVRIRLVFGSYHDVDSSQLAFELAASQAFKEGMRQASPALLEPIMAVEVETPEEYMGDVMGDLNRRRGVVLGMDDDGIGGKKVRAEVPLAEMFGYSTDLRSATQGRATYSMEFKKYSEAPAHIAAAVTEARKG.

In terms of domain architecture, tr-type G spans 8 to 290 (SLYRNIGISA…AVVELLPAPT (283 aa)). Residues 17–24 (AHIDAGKT), 88–92 (DTPGH), and 142–145 (NKMD) contribute to the GTP site.

Belongs to the TRAFAC class translation factor GTPase superfamily. Classic translation factor GTPase family. EF-G/EF-2 subfamily.

It localises to the cytoplasm. In terms of biological role, catalyzes the GTP-dependent ribosomal translocation step during translation elongation. During this step, the ribosome changes from the pre-translocational (PRE) to the post-translocational (POST) state as the newly formed A-site-bound peptidyl-tRNA and P-site-bound deacylated tRNA move to the P and E sites, respectively. Catalyzes the coordinated movement of the two tRNA molecules, the mRNA and conformational changes in the ribosome. The protein is Elongation factor G of Neisseria meningitidis serogroup B (strain ATCC BAA-335 / MC58).